The chain runs to 521 residues: Citrinin biosynthesis cluster MFS transporter ctnC (521 aa).

The disordered stretch occupies residues 1 to 29 (MKEEIDAPVSTDASGTDLENARDQPSGEK). The next 8 membrane-spanning stretches (helical) occupy residues 58 to 78 (SLIT…SSVF), 95 to 115 (VMTL…LVWG), 124 to 144 (LKPL…VAVA), 155 to 175 (FFLG…LADF), 182 to 202 (AIAI…GPIM), 237 to 257 (WTAW…FLTL), 313 to 333 (ILVC…LFFV), and 349 to 369 (GIAA…CLLV). The N-linked (GlcNAc...) asparagine glycan is linked to N383. 4 helical membrane-spanning segments follow: residues 392 to 412 (LPPM…FGWT), 417 to 437 (ISWA…LMIW), 465 to 485 (AVSA…GVDW), and 489 to 509 (LLGF…FYGA).

It belongs to the major facilitator superfamily. CAR1 family.

It is found in the membrane. Functionally, MFS transporter; part of the gene cluster that mediates the biosynthesis the mycotoxin citrinin, a hepato-nephrotoxic compound to humans due to inhibition of respiration complex III. In Monascus purpureus (Red mold), this protein is Citrinin biosynthesis cluster MFS transporter ctnC (ctnC).